The primary structure comprises 605 residues: NADH-ubiquinone oxidoreductase chain 5 (605 aa).

The next 15 helical transmembrane spans lie at threonine 8–threonine 28, isoleucine 34–phenylalanine 54, methionine 87–tyrosine 107, phenylalanine 117–leucine 137, leucine 140–glycine 160, alanine 171–phenylalanine 191, threonine 241–isoleucine 261, isoleucine 273–leucine 293, isoleucine 301–glutamine 321, leucine 324–glycine 344, leucine 366–leucine 386, leucine 409–phenylalanine 429, leucine 457–isoleucine 477, methionine 482–leucine 502, and isoleucine 584–phenylalanine 604.

It belongs to the complex I subunit 5 family. In terms of assembly, core subunit of respiratory chain NADH dehydrogenase (Complex I) which is composed of 45 different subunits.

The protein resides in the mitochondrion inner membrane. It catalyses the reaction a ubiquinone + NADH + 5 H(+)(in) = a ubiquinol + NAD(+) + 4 H(+)(out). In terms of biological role, core subunit of the mitochondrial membrane respiratory chain NADH dehydrogenase (Complex I) which catalyzes electron transfer from NADH through the respiratory chain, using ubiquinone as an electron acceptor. Essential for the catalytic activity and assembly of complex I. The polypeptide is NADH-ubiquinone oxidoreductase chain 5 (MT-ND5) (Rousettus amplexicaudatus (Common rousette)).